Consider the following 142-residue polypeptide: Ninjurin-2 (142 aa).

Positions 1-21 (MESARENIDLQPGSSDPRSQP) are disordered. Residues 1 to 60 (MESARENIDLQPGSSDPRSQPINLNHYATKKSVAESMLDVALFMSNAMRLKAVLEQGPSS) are Extracellular-facing. Residues 12-21 (PGSSDPRSQP) show a composition bias toward polar residues. The helix alpha1 stretch occupies residues 25 to 37 (NHYATKKSVAESM). The segment at 38-57 (LDVALFMSNAMRLKAVLEQG) is helix alpha2. The helical transmembrane segment at 61-92 (HYYTTLVTLISLSLLLQVVIGVLLVVIARLNL) threads the bilayer. Residues 93–96 (NEVE) lie on the Cytoplasmic side of the membrane. The chain crosses the membrane as a helical span at residues 97–126 (KQWRLNQLNNAATILVFFTVVINVFITAFG). Residue Q103 coordinates cholesterol. The Extracellular segment spans residues 127-142 (AHKTGFLAARASRNPL).

This sequence belongs to the ninjurin family. Homooligomer; in response to stimuli, homooligomerizes into filaments. In contrast to NINJ1, the filament is curved toward the intracellular space, preventing its circularization on a relatively flat membrane to mediate plasma membrane rupture: curvature is caused by cholesterol-binding at the cytoplasmic leaflet. In terms of tissue distribution, widely expressed. In adult, higher expression in the bone marrow and peripheral blood lymphocytes, medium in the lung, lymph node, thyroid, uterus, thymus, spleen, prostate and skeletal muscle, lower in the liver, placenta, brain, heart and kidney. In embryo, higher expression in the thymus, heart and liver, lower in the spleen, lung, brain and kidney.

The protein resides in the cell membrane. Its role in unclear. In contrast to NINJ1 paralog, does not mediate plasma membrane rupture (cytolysis) downstream of necroptotic and pyroptotic programmed cell death. While it is able to oligomerize and form filaments, filaments are curved toward the intracellular space, preventing circularization to mediate plasma membrane rupture. May act as a homophilic transmembrane adhesion molecule involved in nerve regeneration. Promotes axonal growth. The protein is Ninjurin-2 of Homo sapiens (Human).